We begin with the raw amino-acid sequence, 189 residues long: Ion-translocating oxidoreductase complex subunit B (189 aa).

The interval 1–26 is hydrophobic; the sequence is MSGIFIAIILLTILALLFGILLGFAA. In terms of domain architecture, 4Fe-4S spans 32–90; it reads EGDPLVDQLEALLPQTQCGQCGYPGCRPYAEAIANGEKINLCPPGGSATMEKLAEMAGV. [4Fe-4S] cluster-binding residues include C49, C52, C57, C73, C114, C117, C120, C124, C144, C147, C150, and C154. 4Fe-4S ferredoxin-type domains lie at 105-134 and 135-164; these read KVAY…GSGK and LMHT…MLPV.

The protein belongs to the 4Fe4S bacterial-type ferredoxin family. RnfB subfamily. As to quaternary structure, the complex is composed of six subunits: RnfA, RnfB, RnfC, RnfD, RnfE and RnfG. The cofactor is [4Fe-4S] cluster.

It is found in the cell inner membrane. Functionally, part of a membrane-bound complex that couples electron transfer with translocation of ions across the membrane. The polypeptide is Ion-translocating oxidoreductase complex subunit B (Shewanella sediminis (strain HAW-EB3)).